Reading from the N-terminus, the 401-residue chain is Phosphoglycerate kinase (401 aa).

Substrate contacts are provided by residues D24–N26, R40, H63–R66, R122, and R155. ATP contacts are provided by residues K206, G297, E328, and G357 to S360.

This sequence belongs to the phosphoglycerate kinase family. As to quaternary structure, monomer.

It is found in the cytoplasm. It carries out the reaction (2R)-3-phosphoglycerate + ATP = (2R)-3-phospho-glyceroyl phosphate + ADP. The protein operates within carbohydrate degradation; glycolysis; pyruvate from D-glyceraldehyde 3-phosphate: step 2/5. This chain is Phosphoglycerate kinase, found in Synechococcus sp. (strain CC9605).